Consider the following 188-residue polypeptide: MAIMSDKWIKEAVINQSMIKPFVEKQVRVHNKDKIISYGLSSYGYDARVSNEFKIFTNINSTTVDPKNFSEYNLVDREVDVCIIPPNSFALGRTIEYFKVPRDILVICVGKSTYARCGIIVNVTPLEPEWEGHVTLEFSNTTPLPAKIYANEGACQFLFLNSDQMCDTSYADRQGKYMKQVGVTLPLT.

Residues 111 to 116 (KSTYAR), 135 to 137 (TLE), Gln-156, Tyr-170, Lys-179, and Gln-180 contribute to the dCTP site. The active-site Proton donor/acceptor is the Glu-137.

The protein belongs to the dCTP deaminase family. As to quaternary structure, homotrimer.

It catalyses the reaction dCTP + H2O + H(+) = dUTP + NH4(+). The protein operates within pyrimidine metabolism; dUMP biosynthesis; dUMP from dCTP (dUTP route): step 1/2. Its function is as follows. Catalyzes the deamination of dCTP to dUTP. The protein is dCTP deaminase of Rickettsia canadensis (strain McKiel).